A 278-amino-acid polypeptide reads, in one-letter code: Orotidine 5'-phosphate decarboxylase (278 aa).

The active-site Proton donor is the K95.

This sequence belongs to the OMP decarboxylase family. Type 2 subfamily.

The catalysed reaction is orotidine 5'-phosphate + H(+) = UMP + CO2. The protein operates within pyrimidine metabolism; UMP biosynthesis via de novo pathway; UMP from orotate: step 2/2. In Mycobacterium ulcerans (strain Agy99), this protein is Orotidine 5'-phosphate decarboxylase.